The primary structure comprises 418 residues: MSLKEMGKNAKQAATILAQLSQQQKNTALQIIAEQLELQSDKILVENAKDIQLAKENGLSDAIIDRLLLTKERINSIAKDVRHIISLSDPIGQIIDGGILESGTKLERVRVPLGVIGVIYEARPNVTVDVATLCLKTSNAVILRGGKETNYSNKILVKVIQDALEQTGLPKNAVQAITDPDRNFVLELLKLDKYVDMIIPRGGAGLHEFCKQNSTIPVIIGGVGVCHVFVEESAEQDKALAVIDNAKTQRPSTCNTLETLLVQESIATEFLPKLVAHLKHKNVKYHADPTALSILEKQNAEVSIVQEQQLRQEWGSLDLNVVIVKDIQQAIAHITEYGTQHSEAILTSSPRLAHQFVSLVDAAAVYVNASTRFTDGGQFGLGAEVAVSTQKLHARGPMGLEALTTYKWVCSGDYTVRQ.

This sequence belongs to the gamma-glutamyl phosphate reductase family.

Its subcellular location is the cytoplasm. The enzyme catalyses L-glutamate 5-semialdehyde + phosphate + NADP(+) = L-glutamyl 5-phosphate + NADPH + H(+). Its pathway is amino-acid biosynthesis; L-proline biosynthesis; L-glutamate 5-semialdehyde from L-glutamate: step 2/2. In terms of biological role, catalyzes the NADPH-dependent reduction of L-glutamate 5-phosphate into L-glutamate 5-semialdehyde and phosphate. The product spontaneously undergoes cyclization to form 1-pyrroline-5-carboxylate. The polypeptide is Gamma-glutamyl phosphate reductase (Histophilus somni (strain 2336) (Haemophilus somnus)).